Consider the following 231-residue polypeptide: LexA repressor (231 aa).

Positions 26-46 (FDEMKLALDLRSKSGIHRLIT) form a DNA-binding region, H-T-H motif. Residues 79 to 98 (VGFQPRVIDGDRPDRPRPAN) form a disordered region. The segment covering 86-95 (IDGDRPDRPR) has biased composition (basic and acidic residues). Active-site for autocatalytic cleavage activity residues include Ser-152 and Lys-190.

Belongs to the peptidase S24 family. Homodimer.

It carries out the reaction Hydrolysis of Ala-|-Gly bond in repressor LexA.. Functionally, represses a number of genes involved in the response to DNA damage (SOS response), including recA and lexA. In the presence of single-stranded DNA, RecA interacts with LexA causing an autocatalytic cleavage which disrupts the DNA-binding part of LexA, leading to derepression of the SOS regulon and eventually DNA repair. In Ruegeria pomeroyi (strain ATCC 700808 / DSM 15171 / DSS-3) (Silicibacter pomeroyi), this protein is LexA repressor.